We begin with the raw amino-acid sequence, 1843 residues long: Cilia- and flagella-associated protein 44 (1843 aa).

The tract at residues Met1–Glu86 is disordered. A compositionally biased stretch (polar residues) spans Leu29–Ser39. Positions Thr41–Asp58 are enriched in acidic residues. WD repeat units follow at residues Gly214–Arg255, Ala258–Lys297, Thr308–Cys346, Cys353–Val390, Phe456–His495, Lys497–Val541, and Pro561–Gly600. Positions Arg701–Pro726 are disordered. Residues Gly705 to Pro724 are compositionally biased toward acidic residues. 2 WD repeats span residues Thr790–Val829 and Asn842–Lys881. Disordered stretches follow at residues Tyr1040–Glu1086, Gln1266–Gly1291, and Lys1488–Phe1524. Over residues Ser1047 to Arg1071 the composition is skewed to basic and acidic residues. Ser1069 bears the Phosphoserine mark. A compositionally biased stretch (polar residues) spans Asp1072–Glu1081. Over residues Gly1492 to Phe1524 the composition is skewed to acidic residues. Coiled-coil stretches lie at residues Arg1548–Glu1603 and Leu1631–Arg1665. One copy of the WD 10 repeat lies at Ile1699 to Asp1744.

It belongs to the CFAP44 family. In terms of tissue distribution, expressed in testis.

Its subcellular location is the cell projection. It localises to the cilium. It is found in the flagellum. The protein resides in the cytoplasm. The protein localises to the cytoskeleton. Its subcellular location is the flagellum axoneme. Flagellar protein involved in sperm flagellum axoneme organization and function. In Mus musculus (Mouse), this protein is Cilia- and flagella-associated protein 44.